The sequence spans 547 residues: DNA mismatch repair protein MutL (547 aa).

This sequence belongs to the DNA mismatch repair MutL/HexB family.

In terms of biological role, this protein is involved in the repair of mismatches in DNA. It is required for dam-dependent methyl-directed DNA mismatch repair. May act as a 'molecular matchmaker', a protein that promotes the formation of a stable complex between two or more DNA-binding proteins in an ATP-dependent manner without itself being part of a final effector complex. This chain is DNA mismatch repair protein MutL, found in Deinococcus radiodurans (strain ATCC 13939 / DSM 20539 / JCM 16871 / CCUG 27074 / LMG 4051 / NBRC 15346 / NCIMB 9279 / VKM B-1422 / R1).